Here is a 113-residue protein sequence, read N- to C-terminus: Large ribosomal subunit protein bL17 (113 aa).

The protein belongs to the bacterial ribosomal protein bL17 family. In terms of assembly, part of the 50S ribosomal subunit. Contacts protein L32.

This chain is Large ribosomal subunit protein bL17, found in Clostridium botulinum (strain Alaska E43 / Type E3).